The sequence spans 282 residues: Chorismate dehydratase (282 aa).

It belongs to the MqnA/MqnD family. MqnA subfamily.

The catalysed reaction is chorismate = 3-[(1-carboxyvinyl)-oxy]benzoate + H2O. It functions in the pathway quinol/quinone metabolism; menaquinone biosynthesis. Functionally, catalyzes the dehydration of chorismate into 3-[(1-carboxyvinyl)oxy]benzoate, a step in the biosynthesis of menaquinone (MK, vitamin K2). The chain is Chorismate dehydratase from Streptomyces coelicolor (strain ATCC BAA-471 / A3(2) / M145).